The following is a 120-amino-acid chain: Large ribosomal subunit protein uL18 (120 aa).

The protein belongs to the universal ribosomal protein uL18 family. In terms of assembly, part of the 50S ribosomal subunit; part of the 5S rRNA/L5/L18/L25 subcomplex. Contacts the 5S and 23S rRNAs.

In terms of biological role, this is one of the proteins that bind and probably mediate the attachment of the 5S RNA into the large ribosomal subunit, where it forms part of the central protuberance. The polypeptide is Large ribosomal subunit protein uL18 (Bacillus cereus (strain AH820)).